An 83-amino-acid polypeptide reads, in one-letter code: Bowman-Birk type proteinase inhibitor C-II (83 aa).

A propeptide spanning residues 1 to 7 is cleaved from the precursor; the sequence is MELNLFK. Intrachain disulfides connect cysteine 21-cysteine 75, cysteine 22-cysteine 37, cysteine 25-cysteine 71, cysteine 27-cysteine 35, cysteine 45-cysteine 52, cysteine 49-cysteine 64, and cysteine 54-cysteine 62.

Belongs to the Bowman-Birk serine protease inhibitor family.

The chain is Bowman-Birk type proteinase inhibitor C-II from Glycine max (Soybean).